Reading from the N-terminus, the 55-residue chain is ATP synthase F(0) complex subunit 8 (55 aa).

The helical transmembrane segment at 4 to 24 (LLPTPWFTIFIYAWMVLLAVI) threads the bilayer.

It belongs to the ATPase protein 8 family. Component of the ATP synthase complex composed at least of ATP5F1A/subunit alpha, ATP5F1B/subunit beta, ATP5MC1/subunit c (homooctomer), MT-ATP6/subunit a, MT-ATP8/subunit 8, ATP5ME/subunit e, ATP5MF/subunit f, ATP5MG/subunit g, ATP5MK/subunit k, ATP5MJ/subunit j, ATP5F1C/subunit gamma, ATP5F1D/subunit delta, ATP5F1E/subunit epsilon, ATP5PF/subunit F6, ATP5PB/subunit b, ATP5PD/subunit d, ATP5PO/subunit OSCP. ATP synthase complex consists of a soluble F(1) head domain (subunits alpha(3) and beta(3)) - the catalytic core - and a membrane F(0) domain - the membrane proton channel (subunits c, a, 8, e, f, g, k and j). These two domains are linked by a central stalk (subunits gamma, delta, and epsilon) rotating inside the F1 region and a stationary peripheral stalk (subunits F6, b, d, and OSCP).

The protein resides in the mitochondrion membrane. In terms of biological role, subunit 8, of the mitochondrial membrane ATP synthase complex (F(1)F(0) ATP synthase or Complex V) that produces ATP from ADP in the presence of a proton gradient across the membrane which is generated by electron transport complexes of the respiratory chain. ATP synthase complex consist of a soluble F(1) head domain - the catalytic core - and a membrane F(1) domain - the membrane proton channel. These two domains are linked by a central stalk rotating inside the F(1) region and a stationary peripheral stalk. During catalysis, ATP synthesis in the catalytic domain of F(1) is coupled via a rotary mechanism of the central stalk subunits to proton translocation. In vivo, can only synthesize ATP although its ATP hydrolase activity can be activated artificially in vitro. Part of the complex F(0) domain. The chain is ATP synthase F(0) complex subunit 8 from Dicentrarchus labrax (European seabass).